The primary structure comprises 194 residues: MASENGDKLELAFSAVPDPKPKKDWVILSLRVVAFFATASATLVMAFNKQTKGMVVATIGTNPVTITLTAMFQHTPAFIFFVIVNAIASFYNLLVIGVEILGPQYDYKGLRLGLIAILDVMTMALAATGDGAATFMAELGRNGNSHARWDKICDKFEAYCNRGGVALVASFVGLILLLVVTVMSITKLLKLNRI.

Over 1–24 (MASENGDKLELAFSAVPDPKPKKD) the chain is Cytoplasmic. A helical transmembrane segment spans residues 25–45 (WVILSLRVVAFFATASATLVM). Residues 46-77 (AFNKQTKGMVVATIGTNPVTITLTAMFQHTPA) lie on the Extracellular side of the membrane. A helical membrane pass occupies residues 78 to 98 (FIFFVIVNAIASFYNLLVIGV). Residues 99 to 111 (EILGPQYDYKGLR) lie on the Cytoplasmic side of the membrane. Residues 112 to 132 (LGLIAILDVMTMALAATGDGA) form a helical membrane-spanning segment. Residues 133–164 (ATFMAELGRNGNSHARWDKICDKFEAYCNRGG) are Extracellular-facing. Residues 165–185 (VALVASFVGLILLLVVTVMSI) form a helical membrane-spanning segment. At 186–194 (TKLLKLNRI) the chain is on the cytoplasmic side.

This sequence belongs to the Casparian strip membrane proteins (CASP) family. As to quaternary structure, homodimer and heterodimers.

It localises to the cell membrane. The protein is CASP-like protein 1B1 of Glycine max (Soybean).